A 314-amino-acid chain; its full sequence is Malate dehydrogenase (314 aa).

Residues 7-12 and Asp32 contribute to the NAD(+) site; that span reads GAGNVG. The substrate site is built by Arg81 and Arg87. Residues Asn94 and 117–119 each bind NAD(+); that span reads VAN. Substrate-binding residues include Asn119 and Arg150. The active-site Proton acceptor is His174.

This sequence belongs to the LDH/MDH superfamily. MDH type 3 family.

It carries out the reaction (S)-malate + NAD(+) = oxaloacetate + NADH + H(+). Functionally, catalyzes the reversible oxidation of malate to oxaloacetate. This Salinibacter ruber (strain DSM 13855 / M31) protein is Malate dehydrogenase.